The sequence spans 739 residues: MSEDSKCPVTGKTAKTAIPMTGRGTTNQDWWPNQLKLNILHQHSSKSNPMGGDFNYAEEFKKLDLAAVKQDLYAMMTDSREWWPADWGHYGGLLIRMAWHSAGTYRMGDGRGGAGSGSQRLAPLNSWPDNVNLDKARRLLWPIKQKYGRKISWADLMVLAGNCALESMGFKTFGFAGGREDAWEPEQDIYWGAEEEWLATSDKPKSRYSGDRDLENPLAAVQMGLIYVNPEGPDGNPDPVASGRDVRETFARMAMNDEETVALVAGGHTFGKCHGAGPATHVGPEPEAAPIEEQGLGWKSSFGSGKGGDTISSGIEGAWKPNPTKWDMGYLKVLFKYEWEKVKSPAGAWQWLAKDVDEEDMIVGAHDPSKKFRPMMTTADLSLRFDPIYEPIARRYLENPEEFADAFARAWFKLTHRDMGPRSRYLGSEVPAEELIWQDPVPAVDHELIDAADIADLKVKILASGLSIPQLVSTAWASASTFRGSDKRGGANGARIRLAPQKDWEVNQPAQLKTVLQTLEGIQQAFNGAQAGGKKVSLADLIVLGGCAAVEQAAGNAGHDVTVPFTPGRTDATSEQTDVASFSVLEPVADGFRNYQKAKFAVRAEELLVDRAQLLTLTAPEMTVLVGGMRVLNTNHGGTPHGVFTDRPETLTNDFFVNLLDMGTTWQPTAEDADIFEGCDRATGELKWTGTRIDLVFGSNSQLRAIAEVYGCADSGEKFVNDFVAVWSKIMNLDRFDLA.

The tryptophyl-tyrosyl-methioninium (Trp-Tyr) (with M-253) cross-link spans 99–227 (WHSAGTYRMG…LAAVQMGLIY (129 aa)). Histidine 100 functions as the Proton acceptor in the catalytic mechanism. Positions 227 to 253 (YVNPEGPDGNPDPVASGRDVRETFARM) form a cross-link, tryptophyl-tyrosyl-methioninium (Tyr-Met) (with W-99). Histidine 268 serves as a coordination point for heme b.

This sequence belongs to the peroxidase family. Peroxidase/catalase subfamily. In terms of assembly, homodimer or homotetramer. It depends on heme b as a cofactor. Post-translationally, formation of the three residue Trp-Tyr-Met cross-link is important for the catalase, but not the peroxidase activity of the enzyme.

The catalysed reaction is H2O2 + AH2 = A + 2 H2O. It carries out the reaction 2 H2O2 = O2 + 2 H2O. Bifunctional enzyme with both catalase and broad-spectrum peroxidase activity. In Syntrophotalea carbinolica (strain DSM 2380 / NBRC 103641 / GraBd1) (Pelobacter carbinolicus), this protein is Catalase-peroxidase.